The chain runs to 487 residues: MLPVIALVGRPNVGKSTLFNRLTRTRDALVADFPGLTRDRKYGQANYDGYEFIVVDTGGIDGSEEGIEIEMADQSLLAIEEADIVLFLVDARVGMTVADQAIANHLRKQEKKCFVVANKTDGIDADSNCAEFYQLSLGEIHHIAASHGRGITLLLEQTLQPLIAELAALDEDVSNDDEELIDLYQEDSEDDSHQAFADKPVKLAIIGRPNVGKSTLTNRILGEERVIVYDMPGTTRDSIYIPMTRNDKEYILIDTAGVRKRKKVSDVVEKFSVIKTLQAIEDCNVVLLVVDARAGISDQDLSLLGFALNSGRSLVIAVNKWDGLDDYVKDRIKSELDRRLGFIDFARLHFISALHGTGVGHLFESVDEAYESATKRISTAMLRRIMDMAQADHQPPLVRGRRVKLKYAHAGGYNPPRIVIHGNQVHDLPDSYKRYLMNYYRKALKIMGTPIKIEFREGDNPFAGRVNKITLSQKRKIRAFSKENRNK.

2 EngA-type G domains span residues 3-166 (PVIA…IAEL) and 201-374 (VKLA…ESAT). GTP-binding positions include 9-16 (GRPNVGKS), 56-60 (DTGGI), 118-121 (NKTD), 207-214 (GRPNVGKS), 254-258 (DTAGV), and 319-322 (NKWD). One can recognise a KH-like domain in the interval 375–459 (KRISTAMLRR…PIKIEFREGD (85 aa)).

Belongs to the TRAFAC class TrmE-Era-EngA-EngB-Septin-like GTPase superfamily. EngA (Der) GTPase family. As to quaternary structure, associates with the 50S ribosomal subunit.

In terms of biological role, GTPase that plays an essential role in the late steps of ribosome biogenesis. The protein is GTPase Der of Pseudoalteromonas translucida (strain TAC 125).